Consider the following 626-residue polypeptide: Two-component response regulator ORR24 (626 aa).

A disordered region spans residues 1 to 22 (MTVEERQGRVGGHGVSGGGGGR). A compositionally biased stretch (gly residues) spans 9 to 22 (RVGGHGVSGGGGGR). One can recognise a Response regulatory domain in the interval 30 to 145 (RVLAVDDDPT…QLRTIWQHVI (116 aa)). Asp-81 carries the 4-aspartylphosphate modification. The segment covering 151–162 (DAKNRGNDDDAG) has biased composition (basic and acidic residues). 2 disordered regions span residues 151 to 215 (DAKN…KKPR) and 402 to 440 (PLESSNQQHLSRVHSSSADPFSTLVGESPQFPDLGRTTN). A compositionally biased stretch (acidic residues) spans 191-202 (NGDDGDDSDENS). Positions 210-269 (TQKKPRVVWSVELHRKFVAAVNQLGIEKAVPKKILDLMNVENITRENVASHLQKYRLYLK) form a DNA-binding region, myb-like GARP. Polar residues predominate over residues 402-421 (PLESSNQQHLSRVHSSSADP).

This sequence belongs to the ARR family. Type-B subfamily. Post-translationally, two-component system major event consists of a His-to-Asp phosphorelay between a sensor histidine kinase (HK) and a response regulator (RR). In plants, the His-to-Asp phosphorelay involves an additional intermediate named Histidine-containing phosphotransfer protein (HPt). This multistep phosphorelay consists of a His-Asp-His-Asp sequential transfer of a phosphate group between first a His and an Asp of the HK protein, followed by the transfer to a conserved His of the HPt protein and finally the transfer to an Asp in the receiver domain of the RR protein.

It localises to the nucleus. Functionally, transcriptional activator that binds specific DNA sequence. Functions as a response regulator involved in His-to-Asp phosphorelay signal transduction system. Phosphorylation of the Asp residue in the receiver domain activates the ability of the protein to promote the transcription of target genes. May directly activate some type-A response regulators in response to cytokinins. This chain is Two-component response regulator ORR24, found in Oryza sativa subsp. japonica (Rice).